Reading from the N-terminus, the 1213-residue chain is Chitin synthase 3 (1213 aa).

A disordered region spans residues M1–D97. The Cytoplasmic segment spans residues M1–K168. A compositionally biased stretch (basic and acidic residues) spans I32–P44. Positions E75–A87 are enriched in polar residues. The helical transmembrane segment at V169–P189 threads the bilayer. At T190–K200 the chain is on the extracellular side. The chain crosses the membrane as a helical span at residues I201 to F221. The Cytoplasmic portion of the chain corresponds to T222–K450. A helical membrane pass occupies residues V451–A471. At C472 to E1016 the chain is on the extracellular side. N-linked (GlcNAc...) asparagine glycans are attached at residues N588 and N1008. The chain crosses the membrane as a helical span at residues L1017–I1037. Residues E1038–L1039 are Cytoplasmic-facing. A helical transmembrane segment spans residues I1040–I1060. The Extracellular portion of the chain corresponds to V1061–T1065. Residues P1066 to I1086 traverse the membrane as a helical segment. Topologically, residues T1087–S1213 are cytoplasmic. Positions E1161 to S1213 are disordered.

This sequence belongs to the chitin synthase family. Class IV subfamily.

It is found in the cell membrane. It catalyses the reaction [(1-&gt;4)-N-acetyl-beta-D-glucosaminyl](n) + UDP-N-acetyl-alpha-D-glucosamine = [(1-&gt;4)-N-acetyl-beta-D-glucosaminyl](n+1) + UDP + H(+). Polymerizes chitin, a structural polymer of the cell wall and septum, by transferring the sugar moiety of UDP-GlcNAc to the non-reducing end of the growing chitin polymer. This is Chitin synthase 3 (CHS3) from Candida albicans (Yeast).